The sequence spans 123 residues: Small ribosomal subunit protein uS12 (123 aa).

D89 is modified (3-methylthioaspartic acid).

This sequence belongs to the universal ribosomal protein uS12 family. In terms of assembly, part of the 30S ribosomal subunit. Contacts proteins S8 and S17. May interact with IF1 in the 30S initiation complex.

With S4 and S5 plays an important role in translational accuracy. Functionally, interacts with and stabilizes bases of the 16S rRNA that are involved in tRNA selection in the A site and with the mRNA backbone. Located at the interface of the 30S and 50S subunits, it traverses the body of the 30S subunit contacting proteins on the other side and probably holding the rRNA structure together. The combined cluster of proteins S8, S12 and S17 appears to hold together the shoulder and platform of the 30S subunit. This chain is Small ribosomal subunit protein uS12, found in Syntrophobacter fumaroxidans (strain DSM 10017 / MPOB).